The sequence spans 385 residues: MNIHEYQGKEVLRKYGVSVPEGKVAFTAEEAVESAKSLSSSVYVVKAQIHAGGRGKAGGVKIAKSLDEVKAYAEELLGKTLVTHQTGPDGQVIKRLLIEEGCDIKKEYYIGLVLDRATSRIVLMASEEGGTEIEEVAEKTPEKIKKAVIDPAVGLQGYQAREIAFAINIPKELVGKAAKFMLGLYKAFVEKDCSIAEINPLVVTGDGNVMALDAKLNFDSNALYRQKDIMEYRDLDEEDPKEIEASKYDLSYISLDGNIGCMVNGAGLAMSTMDIIKHYGGEPANFLDVGGGATAEKVTEAFKIILSDQNVKGIFVNIFGGIMKCDVIAEGVVEATRQVGLTLPLVVRLEGTNVDLGKKILSESGLNITSAESMADGAQKIVSLV.

The region spanning 9-244 is the ATP-grasp domain; the sequence is KEVLRKYGVS…LDEEDPKEIE (236 aa). Residues lysine 46, 53-55, glutamate 99, cysteine 102, and glutamate 107 contribute to the ATP site; that span reads GRG. Residues asparagine 199 and aspartate 213 each contribute to the Mg(2+) site. Phosphoserine is present on serine 220. Substrate contacts are provided by residues asparagine 264 and 321–323; that span reads GIM.

It belongs to the succinate/malate CoA ligase beta subunit family. Heterotetramer of two alpha and two beta subunits. Interacts with BrxC. Mg(2+) is required as a cofactor.

It catalyses the reaction succinate + ATP + CoA = succinyl-CoA + ADP + phosphate. The enzyme catalyses GTP + succinate + CoA = succinyl-CoA + GDP + phosphate. It participates in carbohydrate metabolism; tricarboxylic acid cycle; succinate from succinyl-CoA (ligase route): step 1/1. Succinyl-CoA synthetase functions in the citric acid cycle (TCA), coupling the hydrolysis of succinyl-CoA to the synthesis of either ATP or GTP and thus represents the only step of substrate-level phosphorylation in the TCA. The beta subunit provides nucleotide specificity of the enzyme and binds the substrate succinate, while the binding sites for coenzyme A and phosphate are found in the alpha subunit. This Bacillus subtilis (strain 168) protein is Succinate--CoA ligase [ADP-forming] subunit beta.